The primary structure comprises 513 residues: Alpha-amylase mde5 (513 aa).

An N-terminal signal peptide occupies residues 1 to 25; it reads MKHNEVFGWTLKVLSFLLVVIPANA. A disulfide bond links Cys-52 and Cys-60. Position 105 (Trp-105) interacts with substrate. Asn-143 is a Ca(2+) binding site. A substrate-binding site is contributed by His-144. N-linked (GlcNAc...) asparagine glycosylation occurs at Asn-162. Cys-171 and Cys-184 are disulfide-bonded. 2 residues coordinate Ca(2+): Glu-182 and Asp-195. Residue Arg-224 participates in substrate binding. Residues Asp-226, His-230, and Glu-250 each contribute to the Ca(2+) site. The Nucleophile role is filled by Asp-226. 229 to 230 is a substrate binding site; it reads KH. The active-site Proton donor is Glu-250. A substrate-binding site is contributed by Gly-254. Cys-260 and Cys-304 are joined by a disulfide. Residue Asp-318 participates in substrate binding. A glycan (N-linked (GlcNAc...) asparagine) is linked at Asn-357. Arg-365 serves as a coordination point for substrate. Cys-454 and Cys-488 are joined by a disulfide.

This sequence belongs to the glycosyl hydrolase 13 family. Ca(2+) is required as a cofactor.

Its subcellular location is the endoplasmic reticulum. It catalyses the reaction Endohydrolysis of (1-&gt;4)-alpha-D-glucosidic linkages in polysaccharides containing three or more (1-&gt;4)-alpha-linked D-glucose units.. The protein is Alpha-amylase mde5 (mde5) of Schizosaccharomyces pombe (strain 972 / ATCC 24843) (Fission yeast).